The following is a 1141-amino-acid chain: Collagen alpha-1(XXVIII) chain (1141 aa).

The N-terminal stretch at 1-20 is a signal peptide; it reads MRRRDVAFCLLLLPAFMTQA. The 180-residue stretch at 48–227 folds into the VWFA 1 domain; the sequence is DVVFILDSSE…TLVDRIQERL (180 aa). Residues 242–770 are disordered; the sequence is CEKGEPGDPG…KQGLQGPKGD (529 aa). 5 consecutive Collagen-like domains span residues 243–300, 301–358, 501–544, 545–588, and 733–769; these read EKGE…RGEC, GKPG…GAPG, GPKG…MPGK, GQPG…MPGA, and GQKG…GPKG. Residues 291–311 show a composition bias toward basic and acidic residues; sequence KGDKGERGECGKPGMKGDKGP. Residues 335-344 show a composition bias toward low complexity; sequence PKGFQGNKGE. Residues 345–356 show a composition bias toward pro residues; that stretch reads PGPPGPYGPPGA. Residues 735 to 753 are compositionally biased toward basic and acidic residues; the sequence is KGEHGDRGDVGRKGEKGET. The 179-residue stretch at 798 to 976 folds into the VWFA 2 domain; that stretch reads ELVFVIDSSE…TLQDTLKQKL (179 aa). The region spanning 1088–1138 is the BPTI/Kunitz inhibitor domain; sequence CEEALKPGECGDYVVRWYYDKQVNSCARFWFSGCNGSGNRFHSEKECRETC. Cystine bridges form between C1088–C1138, C1097–C1121, and C1113–C1134.

It belongs to the VWA-containing collagen family. As to quaternary structure, trimer or homomer. Secreted into as a 135 kDa monomer under reducing conditions and as a homotrimer under non-reducing conditions. As to expression, expressed in skin, intestine, sternum, brain and kidney. Lower expression is also observed in heart, lung, sciatic nerve, dorsal root ganglia, peripheral nerves and calvaria of newborn mice and in intestine and brain of adult mice. Found in basement membrane surrounding a particular subset of Schwann cells in adult sciatic nerve.

It is found in the secreted. Its subcellular location is the extracellular space. The protein localises to the extracellular matrix. It localises to the basement membrane. May act as a cell-binding protein. The protein is Collagen alpha-1(XXVIII) chain (Col28a1) of Mus musculus (Mouse).